The primary structure comprises 152 residues: Nucleoside diphosphate kinase A (152 aa).

Residues Lys-12, Phe-60, Arg-88, and Thr-94 each coordinate ATP. Residue Lys-100 forms a Glycyl lysine isopeptide (Lys-Gly) (interchain with G-Cter in ubiquitin) linkage. Positions 105 and 115 each coordinate ATP. The Pros-phosphohistidine intermediate role is filled by His-118. A phosphoserine mark is found at Ser-120, Ser-122, and Ser-125.

This sequence belongs to the NDK family. In terms of assembly, hexamer of two different chains: An and B (A6, A5B, A4B2, A3B3, A2B4, AB5, B6). Interacts with PRUNE1. Component of the SET complex, composed of at least ANP32A, APEX1, HMGB2, NME1, SET and TREX1. Within this complex, interacts directly with SET. Also interacts with TREX1, but only following translocation to the nucleus. Mg(2+) is required as a cofactor. As to expression, isoform 1 is expressed in heart, brain, placenta, lung, liver, skeletal muscle, pancreas, spleen and thymus. Expressed in lung carcinoma cell lines but not in normal lung tissues. Isoform 2 is ubiquitously expressed and its expression is also related to tumor differentiation.

Its subcellular location is the cytoplasm. The protein resides in the nucleus. The enzyme catalyses a 2'-deoxyribonucleoside 5'-diphosphate + ATP = a 2'-deoxyribonucleoside 5'-triphosphate + ADP. The catalysed reaction is a ribonucleoside 5'-diphosphate + ATP = a ribonucleoside 5'-triphosphate + ADP. Autophosphorylation at His-118 increases serine/threonine protein kinase activity of the enzyme. Interaction with the SET complex inhibits the endonuclease activity. Functionally, major role in the synthesis of nucleoside triphosphates other than ATP. The ATP gamma phosphate is transferred to the NDP beta phosphate via a ping-pong mechanism, using a phosphorylated active-site intermediate. Possesses nucleoside-diphosphate kinase, serine/threonine-specific protein kinase, geranyl and farnesyl pyrophosphate kinase, histidine protein kinase and 3'-5' exonuclease activities. Involved in cell proliferation, differentiation and development, signal transduction, G protein-coupled receptor endocytosis, and gene expression. Required for neural development including neural patterning and cell fate determination. During GZMA-mediated cell death, works in concert with TREX1. NME1 nicks one strand of DNA and TREX1 removes bases from the free 3' end to enhance DNA damage and prevent DNA end reannealing and rapid repair. The sequence is that of Nucleoside diphosphate kinase A (NME1) from Homo sapiens (Human).